Consider the following 598-residue polypeptide: Elongation factor 4 (598 aa).

Residues 4-181 (KKIRNFAIIA…AIVNLIPPPQ (178 aa)) enclose the tr-type G domain. GTP contacts are provided by residues 16–21 (DHGKST) and 128–131 (NKID).

This sequence belongs to the TRAFAC class translation factor GTPase superfamily. Classic translation factor GTPase family. LepA subfamily.

The protein localises to the cell membrane. The catalysed reaction is GTP + H2O = GDP + phosphate + H(+). Its function is as follows. Required for accurate and efficient protein synthesis under certain stress conditions. May act as a fidelity factor of the translation reaction, by catalyzing a one-codon backward translocation of tRNAs on improperly translocated ribosomes. Back-translocation proceeds from a post-translocation (POST) complex to a pre-translocation (PRE) complex, thus giving elongation factor G a second chance to translocate the tRNAs correctly. Binds to ribosomes in a GTP-dependent manner. The protein is Elongation factor 4 of Mesomycoplasma hyopneumoniae (strain 7448) (Mycoplasma hyopneumoniae).